Reading from the N-terminus, the 125-residue chain is MYIYIYIYVYAICNTMRDGNAFYRASSICNFASFQFFRHSLIHALKLAAKSFKIFPMVKLIWLYVCIKLLYDELLISSMSDIQIDRQSFNLDKSWFNCLICLDLSCSVNCLISNLLRFIVGVDVL.

This is an uncharacterized protein from Saccharomyces cerevisiae (strain ATCC 204508 / S288c) (Baker's yeast).